Here is a 190-residue protein sequence, read N- to C-terminus: Biphenyl-2,3-diol 1,2-dioxygenase 2 (190 aa).

The VOC domain maps to 6–124 (KFAHVVLQTS…DGNFVELQID (119 aa)). Residues His-9, His-72, and Glu-120 each contribute to the Fe cation site.

This sequence belongs to the extradiol ring-cleavage dioxygenase family. As to quaternary structure, homohexamer. The cofactor is Fe(2+).

It catalyses the reaction biphenyl-2,3-diol + O2 = 2-hydroxy-6-oxo-6-phenylhexa-2,4-dienoate + H(+). Its pathway is xenobiotic degradation; biphenyl degradation; 2-hydroxy-2,4-pentadienoate and benzoate from biphenyl: step 3/4. In Rhodococcus globerulus, this protein is Biphenyl-2,3-diol 1,2-dioxygenase 2 (bphC2).